The sequence spans 633 residues: MERGSCSAPGDPGHLGLFLQRLRQVFDACDGDADGFIKVEHFVALGLQFAQGDEVKKLAKRLDPNAQGRIGFKDFCHGVLAMKGCDKFVKGILGVTGTAPQHYEAPYTPYYYQSPETIEGPFLDTESSYSDSEFFAYEDGLTLSHRDAQHESDLDSAMYSTPSSEASDEGRNEDKAGGLGSLYLPGEQNLLKPSAGSGFSTHSTASLISNEEQFEDYGEGEDIDYSPGSPCPDDESRTNALSDLGSSVPSSAGQTPRKARLMYNTDLLDIYCTQCSKKITLLNDLEARLKNLKANSPNRKISSTAFGRQLLHNSNLSSSNGSTEDLFRDSIDSCENDITEKVSFLEKKVTELENDNLTNGDVKNKLKHENIHLVHRVHELEEFLRDQETKSEQVLDEESKRHRETYSKLAREKGTEIVLLSARVQELQEENEDLLTSLTRLKSHTVRIDEERQRVWDKLEDTSLRLKDETDLYKRLMDKLRQNRLHFQKEREATQELIEDLRRELDHLQIYKLECERSGRGPPSGLTELNVKSREVELEQEIRRLKQDNQKLRDQNDDLNGQILSLSLYEAKSLFSTQTKAQSLAAEIDSASKDELMEALKEQEEINYRLRQYMDKIILAILDHNPSILEIKN.

EF-hand domains are found at residues 17–52 (LFLQRLRQVFDACDGDADGFIKVEHFVALGLQFAQG) and 50–85 (AQGDEVKKLAKRLDPNAQGRIGFKDFCHGVLAMKGC). Aspartate 30, aspartate 32, aspartate 34, aspartate 63, asparagine 65, arginine 69, and aspartate 74 together coordinate Ca(2+). Disordered stretches follow at residues 152 to 182 (SDLDSAMYSTPSSEASDEGRNEDKAGGLGSL) and 218 to 257 (GEGEDIDYSPGSPCPDDESRTNALSDLGSSVPSSAGQTPR). Polar residues predominate over residues 238–254 (TNALSDLGSSVPSSAGQ). Residues 410-613 (AREKGTEIVL…EEINYRLRQY (204 aa)) adopt a coiled-coil conformation. Residues 570–632 (EAKSLFSTQT…DHNPSILEIK (63 aa)) enclose the FIP-RBD domain.

As to quaternary structure, homodimer. Forms a complex with Rab11 (rab11a or rab11b) and arf6.

The protein resides in the recycling endosome membrane. It is found in the cleavage furrow. It localises to the midbody. Its subcellular location is the cytoplasmic vesicle. Acts as a regulator of endocytic traffic by participating in membrane delivery. Required for the abscission step in cytokinesis, possibly by acting as an 'address tag' delivering recycling endosome membranes to the cleavage furrow during late cytokinesis. In Xenopus tropicalis (Western clawed frog), this protein is Rab11 family-interacting protein 4 (rab11fip4).